The following is a 709-amino-acid chain: MSHTTVADRINELRSLIRRYDYHYYVLDDPIVSDAEYDALMTELRALEAAHPELITPDSPTQRVSGTPASQFAKVQHPQPMLSLGNAFTKADLLAWRDRVLRLLGPDAIVAYVVEPKIDGLAVALTYRDGRLVQGATRGDGEVGEDVTANLRTIGSIPLTLQATSTPQDDDLPTTLPTTIEVRGEVYMRTADFETLNDRLAAAGEKIFANPRNAAAGSLRQKDPTITAARPLRFFAYGVGVVEGISLSSQWQTLRYLRALGFPVNQDVRRFTDFAEVLAYCEAWMAKRDDLPYEADGVVIKIDDFAQQRELGVVGRDPRWAIAFKFPAREAITRLLDITVNVGRTGVVTPNAELEPVQIGGVTVRNASLHNADYIAQRDIRIGDYVIVKRAGDVIPYVVGPVIARRDGSERPWQFPTHCPACGSPLEREEGEAAWRCNNFSICPAQLVRRVEHFVSRSALDIVGMGERQAELFVQRGLIRDVADIFFLKADQLAELEGFGPKRIANLLAAIDAARQRPLDRLLVGLGIRYVGTVAAQTLVAALGSLDAIMAARQEELEQIPGIGPVVAASIVDFFSRPANRALIEKLRAAGVQMGGVSGPTRQSDTLAGKTFVLTGTLPSLSREQASALIVAHGGKVTDSVSKKTSYVVAGANAGSKLAKALQLGIPVIDEAGLLALIGTTAEPPPSPPPPPPETNTDGNQLLLPLDGE.

NAD(+) is bound by residues 34 to 38 (DAEYD), 83 to 84 (SL), and glutamate 115. The active-site N6-AMP-lysine intermediate is lysine 117. NAD(+) is bound by residues arginine 138, glutamate 185, lysine 301, and lysine 325. Zn(2+) is bound by residues cysteine 419, cysteine 422, cysteine 437, and cysteine 443. The region spanning 602 to 691 (RQSDTLAGKT…AEPPPSPPPP (90 aa)) is the BRCT domain. The segment at 679–709 (GTTAEPPPSPPPPPPETNTDGNQLLLPLDGE) is disordered. Positions 683–694 (EPPPSPPPPPPE) are enriched in pro residues.

The protein belongs to the NAD-dependent DNA ligase family. LigA subfamily. Mg(2+) serves as cofactor. The cofactor is Mn(2+).

It catalyses the reaction NAD(+) + (deoxyribonucleotide)n-3'-hydroxyl + 5'-phospho-(deoxyribonucleotide)m = (deoxyribonucleotide)n+m + AMP + beta-nicotinamide D-nucleotide.. DNA ligase that catalyzes the formation of phosphodiester linkages between 5'-phosphoryl and 3'-hydroxyl groups in double-stranded DNA using NAD as a coenzyme and as the energy source for the reaction. It is essential for DNA replication and repair of damaged DNA. The polypeptide is DNA ligase (Chloroflexus aurantiacus (strain ATCC 29364 / DSM 637 / Y-400-fl)).